A 239-amino-acid chain; its full sequence is Ribosomal RNA large subunit methyltransferase E (239 aa).

A disordered region spans residues 1 to 20; that stretch reads MTKAPIAGNRTGRKLGQRVK. Positions 11 to 20 are enriched in basic residues; the sequence is TGRKLGQRVK. S-adenosyl-L-methionine-binding residues include glycine 81, tryptophan 83, aspartate 104, aspartate 120, and aspartate 144. Lysine 184 functions as the Proton acceptor in the catalytic mechanism.

Belongs to the class I-like SAM-binding methyltransferase superfamily. RNA methyltransferase RlmE family.

The protein resides in the cytoplasm. The catalysed reaction is uridine(2552) in 23S rRNA + S-adenosyl-L-methionine = 2'-O-methyluridine(2552) in 23S rRNA + S-adenosyl-L-homocysteine + H(+). In terms of biological role, specifically methylates the uridine in position 2552 of 23S rRNA at the 2'-O position of the ribose in the fully assembled 50S ribosomal subunit. The protein is Ribosomal RNA large subunit methyltransferase E of Rhizobium johnstonii (strain DSM 114642 / LMG 32736 / 3841) (Rhizobium leguminosarum bv. viciae).